The chain runs to 4001 residues: MNNDAKNHESDDLNVRSTAYFNQQTTTNQPKAPATSKNNTGSGSGSNNNNNNTNQNPNRQLNHNLPRIAAARQSIAAALLKNSGRKILTAKNEPLTTTESSGVLTNTPLPSNSRLKVNNNNNTNNTAKMSGTSSSQSSATPTPPTASSSTTTTTTTNISTGGGGSGSSGGGGGSTTVIANPASVTNTGAGSAAKFRAAVASAPSPALPATNAPANATAAAAIAAIATAPAPSSSSSSSSSSKKTRAAVAALKRQVALQQQQPVTGNAPNMTSKDSAHLKFATTTLLMGAAAAAADSNAGAALGGSGAGGSGSSSSVGAVGGARMALNPAVDMANAAVLLKQKLKDAAAAASASASNRSATSSMSSTASSLSSSAGIVNAISSALQNIITPDTDTDTEFYPQPVTTDLSESEEESVSEDDIPESDPDSCPHEGEVREDEDETEEESEDSDESEGEEEEEDEEEIDVLQDNDADDEEIDDEDEEEDAPEVSSFLLDANNKRSSNISALLEAAANEKAPVLRHATHAIDETKQALTKMRCASSPRDKNSGFSRSLVAACTDNDVNTVKRLLCKGNVNLNDAAASTDDGESLLSMACSAGYYELAQVLLAMSAAQVEDKGQKDSTPLMEAASAGHLDIVKLLLNHNADVNAHCATGNTPLMFACAGGQVDVVKVLLKHGANVEEQNENGHTPLMEAASAGHVEVAKVLLEHGAGINTHSNEFKESALTLACYKGHLDMVRFLLQAGADQEHKTDEMHTALMEASMDGHVEVARLLLDSGAQVNMPTDSFESPLTLAACGGHVELATLLIERGANIEEVNDEGYTPLMEAAREGHEEMVALLLSKGANINATTEETQETALTLACCGGFMEVAAFLIKEGANLELGASTPLMEASQEGHTDLVSFLLKKKANVHAETQTGDTALTHACENGHTDAAGVLLSYGAELEHESEGGRTPLMKACRAGHLCTVKFLIQKGANVNKQTTSNDHTALSLACAGGHQSVVELLLKNNADPFHKLKDNSTMLIEASKGGHTRVVELLFRYPNISPTENAASANVTQAAPTSNQPGPNQMRQKIMKQQLQHQLQQLNAPPGLHELSEAARASNQQHFHQQQFSSAGNGSSNIVAMGTGDFLDAGELQLTATAGMSAGAGTSTTGSETGMEEYGEVGGIDLTTLGAQQQEGLIAKSRLFHLQQQQQQQQQQQQQQQQQQQQQQQQQQQQQQPPAAGQHQLVPCKHFDLDMEHINSLQPPQKAPPAPPVLFHTVCQQPVMQQQQQQLQPGQLKLKAMLPNRNRALKTAEVVEFIDCPVDQQQPGEQVRTQPLGEDGKTPQFACAGEDPRLQRRRGFMPELKKGELPPESSSSDPNELALKGADNNQPVPTALDNSACAQIPARNSGGAITHSSEVLQSTAISDRPKVKATNKNNRKQAAAAAAAAAAAAAAAAAAAQHAQQVLPNPMVSIYNNLHLQHLQHPHLQFQQQLQLHHQRVAGLDNAAAAAAAAASSANMAYSISPASPLPSPTGSGNYVDQQLQQQSMDVALQRKTAMDDFRGMLETAVNGPRGRKDLALNTPQLNFFKDGWHMVGVHNFFGDQPKSPTETPPEMEETTMSSPTEADRLGSEPRAEMKNLATLCSAAAAAAAVAAVNKDQVEISSDLESECEDDAEGGAGADCEENTLPPEPIELAAALREDGIIVEEEEDDEEEDDDDEEQDTNSGEVDKLNYDDEDAEVDNDGEVDYIDEDEGGGEGEEEEDDADDDEFFLDEPDSDQGTGNNNNNSKSGASSLPLKQRKMATRLENLILNSQTVCDFPPELSNSELVHVLPQISNLKAAANSNAALNSVLQQQLAAASAAAAHAKASVVHQKQQHGEGDQQCEDDGSASASELYSGLEHFANDGEMEDIFQELASSLNYPELAEFSLNQMCKGRFAGNWAQSSGKWTGQEQLVGVVRSPGLINPGDVPQDAQRQANLVLLDYPMQQNIQLEQRLLDAEEMHLQQHQQTPLSLLPFTDEQQQQLHHQALSNASDFQQHQQLALENDPELKQQLQQNSNARIIKAVAAQHQQQPPTNFVYNVESGDKNAPPVQLLFQLPPHMAQHQAQQQQGVGEPLTEQQQQQLHAEQAHLFQHRTGGQRPPTQSELEQVAQELLLQRSGQVPAGAPVVGVQAIPLKQKHFNLHPPPCPPTCVQHQVATQTHPASVVVPQPAVGYTQFALQASQQQQMQQNELSIWPMATPTPAPSSGVSSTKSMPGGIAKKAIDKQSRKERRCVVRQTPAGIQENTKLHLQPQVATAQQQFLVQNQLAVATTVSLDKTIEIDSETESNHDTALTLACAGGHEELVELLINRGANIEHRDKKGFTPLILAATAGHDKVVDILLKHSAELEAQSERTKDTPLSLACSGGRYEVVELLLSVGANKEHRNVSDYTPLSLAASGGYVNIIKLLLSHGAEINSRTGSKLGISPLMLAAMNGHTPAVKLLLDQGSDINAQIETNRNTALTLACFQGRHEVVSLLLDRRANVEHRAKTGLTPLMEAASGGYIEVGRVLLDKGADVNAAPVPTSRDTALTIAADKGHQKFVELLLSRNASVEVKNKKGNSPLWLAAHGGHLSVVELLYDHNADIDSQDNRRVSCLMAAFRKGHTKIVKWMVQYVSQFPSDQEMIRFIGTISDKELIDKCFDCMKILRSAKEAQAVKANKNASILLEELDLERTREESRKAAAARRRERKKKKKMEKKEEKRRQQQGNGPGGDDMQGDDDDASDKDDDSDKDDEDEEAAPAAAREEGDSGIDQGSCSSGDTKGARFGGSQSAQAAEAAANSVSTNSQGKKNKKQAKNKVLISVEPTQPVITSNSVLKGVCAKKHPAVEVVKQPPATQQAAPLKRQLDVKKEEPALKKKEEKNSSSSSSSKREKENLAPKEVALPAKQQPSSSSKLQSSESASNINSSTATNTSSANTTRKEVAKPASQTASATTLNPAKRTEVDGWKEVVRKSSAQQTTAVGASGAPLPVTATSSATSVQHHPHHHLANSSSNSSSSLTTSTTTAASSVPEMTCKKVQVPVNAISRVIGRGGSNINAIRATTGAHIEVEKQGKNQSERCITIKGLTDATKQAHMLILALIKDPDVDILQMLPRINSSIKQASSGGASTPMSVGTWDNRTAAGVNAYTFSSAASTTSTSSSSSASSTTPAGASYSNAHKQHQQQPQSVKGPSGRSSTSVKSNGSSTKVSASSGSGSRSGRAGSSYLAQQQPGRSSGGGSSNGVIKSKSESSSKSLPAAQKSSTTLGKSSTVSPGAQNFAKAAAIGQSSPKKAEGGATSAVVTSAGGRSSGVVAPFGRGKPVAGQGGPAATAASNVAQLGSVSGNSNILAGPIGTFNVADVAAVNAAAAAGAAAATNSNVKPIAPIAPPSKRVGSPTQVQQQHQTQQQQQQQLPQPAPVPGPQPQQQPLQQQQQQQAPQQQPQQPNQQQQPQTSQQNLVINTNLLNDLMAASAANTTSDSFSAQLAAKLSSAYSLFSDYQQSQWGKLGDPGIGGGAGAVGDGLPQADASKAPGYNRNILSSPVGSSKASSNHSTSPPVGNVIQQQQQQQPQSSQQALNIITSGPGGPATAPARSPMVSANEGNPAVGQPSMNGTQGLGETAPAHSPGVIKPPTATVPIQRHVPMPISAPEAGAPPTFGAIGSNPASGNNSAAAQAAAAAAASAMIDRQQQNLQNLQTLQNLQRMVGASQQQQPQQQLNYPMDPTSSFIVDANNVLRLNPRVIFPQGNTKPPQPPPQGGTQSNVFGGNPGRQPPGTGARQPGGAAAQRWYGGTLEYPSYTGRDMLHLENGAGGMAGMGSPSAMSPNHDDIRKMPRPIGTERAASWKYNNFNVGGPSLNMEDALASVLPPWAHELKAQPPGLQQPPPPPQSQQQQQQPLNWLKQQPQQQQYRAYNNGPYPQQQQQHEPMNMPMDYHNMQAPPNMSQQQQQHVNLMPSYGYQHFVGAPGAVDISAHMPDKMEVWDHHDKHMPWTNYTTNWSN.

The segment covering 1–14 has biased composition (basic and acidic residues); that stretch reads MNNDAKNHESDDLN. 3 disordered regions span residues 1–61, 91–174, and 391–494; these read MNND…NRQL, KNEP…GGGS, and DTDT…FLLD. Residues 15 to 30 show a composition bias toward polar residues; the sequence is VRSTAYFNQQTTTNQP. Positions 38 to 61 are enriched in low complexity; that stretch reads NNTGSGSGSNNNNNNTNQNPNRQL. Polar residues predominate over residues 94 to 117; it reads PLTTTESSGVLTNTPLPSNSRLKV. Residues 118 to 159 are compositionally biased toward low complexity; sequence NNNNNTNNTAKMSGTSSSQSSATPTPPTASSSTTTTTTTNIS. Residues 160 to 174 are compositionally biased toward gly residues; sequence TGGGGSGSSGGGGGS. Composition is skewed to acidic residues over residues 408-425 and 434-486; these read SESE…ESDP and VRED…EDAP. Phosphoserine is present on Ser501. ANK repeat units lie at residues 546–575, 584–614, 618–647, 651–680, 684–713, 718–747, 751–780, 784–813, 817–846, 851–880, 881–910, 914–943, 947–976, 981–1011, and 1014–1043; these read SGFS…NVNL, DGES…QVED, KDST…DVNA, TGNT…NVEE, NGHT…GINT, FKES…DQEH, EMHT…QVNM, SFES…NIEE, EGYT…NINA, TQET…NLEL, GAST…NVHA, TGDT…ELEH, GGRT…NVNK, NDHT…PFHK, and DNST…ISPT. Disordered regions lie at residues 1046 to 1067 and 1306 to 1376; these read AASA…NQMR and QPGE…PTAL. Over residues 1367-1376 the composition is skewed to polar residues; sequence DNNQPVPTAL. Phosphoserine is present on residues Ser1389 and Ser1588. 6 disordered regions span residues 1583–1612, 1646–1669, 1682–1779, 1852–1872, 2084–2108, and 2225–2256; these read GDQP…RLGS, SDLE…ENTL, EDGI…SLPL, VVHQ…DGSA, MAQH…QQLH, and TPAP…KERR. Acidic residues-rich tracts occupy residues 1646–1657, 1685–1704, and 1716–1759; these read SDLESECEDDAE, IIVE…EEQD, and DDED…EPDS. Residues 1760-1776 are compositionally biased toward low complexity; sequence DQGTGNNNNNSKSGASS. The segment covering 2084–2093 has biased composition (low complexity); that stretch reads MAQHQAQQQQ. Over residues 2228–2237 the composition is skewed to polar residues; the sequence is PSSGVSSTKS. ANK repeat units lie at residues 2312-2341, 2345-2374, 2379-2408, 2412-2441, 2447-2476, 2481-2510, 2514-2543, 2549-2578, 2582-2611, and 2615-2644; these read NHDT…NIEH, KGFT…ELEA, TKDT…NKEH, SDYT…EINS, LGIS…DINA, NRNT…NVEH, TGLT…DVNA, SRDT…SVEV, KGNS…DIDS, and RRVS…QFPS. Positions 2674-2732 form a coiled coil; that stretch reads AKEAQAVKANKNASILLEELDLERTREESRKAAAARRRERKKKKKMEKKEEKRRQQQGN. A Phosphoserine modification is found at Ser2687. The residue at position 2698 (Thr2698) is a Phosphothreonine. Positions 2699–3033 are disordered; sequence REESRKAAAA…TSTTTAASSV (335 aa). The segment covering 2706–2719 has biased composition (basic residues); sequence AAARRRERKKKKKM. A compositionally biased stretch (acidic residues) spans 2739-2762; the sequence is MQGDDDDASDKDDDSDKDDEDEEA. A phosphoserine mark is found at Ser2747 and Ser2753. The span at 2793 to 2810 shows a compositional bias: low complexity; that stretch reads SQSAQAAEAAANSVSTNS. Polar residues predominate over residues 2828-2839; that stretch reads EPTQPVITSNSV. The span at 2868-2886 shows a compositional bias: basic and acidic residues; that stretch reads RQLDVKKEEPALKKKEEKN. The span at 2906–2941 shows a compositional bias: low complexity; the sequence is ALPAKQQPSSSSKLQSSESASNINSSTATNTSSANT. The span at 2950–2960 shows a compositional bias: polar residues; that stretch reads ASQTASATTLN. The segment covering 2963 to 2975 has biased composition (basic and acidic residues); the sequence is KRTEVDGWKEVVR. The span at 2995–3004 shows a compositional bias: polar residues; the sequence is TATSSATSVQ. Residues 3012 to 3032 show a composition bias toward low complexity; the sequence is ANSSSNSSSSLTTSTTTAASS. The KH domain occupies 3036–3100; that stretch reads MTCKKVQVPV…DATKQAHMLI (65 aa). Composition is skewed to low complexity over residues 3156-3178, 3195-3227, and 3244-3257; these read ASTT…ASYS, SGRS…AGSS, and NGVI…SSKS. 4 disordered regions span residues 3156-3329, 3383-3457, 3520-3636, and 3744-3786; these read ASTT…GQGG, KPIA…QTSQ, AVGD…PPTA, and IFPQ…GGAA. A compositionally biased stretch (polar residues) spans 3262-3278; sequence QKSSTTLGKSSTVSPGA. Over residues 3396 to 3416 the composition is skewed to low complexity; that stretch reads GSPTQVQQQHQTQQQQQQQLP. Residues 3417 to 3427 show a composition bias toward pro residues; the sequence is QPAPVPGPQPQ. Residues 3428–3457 are compositionally biased toward low complexity; the sequence is QQPLQQQQQQQAPQQQPQQPNQQQQPQTSQ. Polar residues predominate over residues 3539-3559; it reads NILSSPVGSSKASSNHSTSPP. The span at 3565–3577 shows a compositional bias: low complexity; the sequence is QQQQQQQPQSSQQ. A Phosphoserine modification is found at Ser3596. Residues 3774–3786 show a composition bias toward low complexity; sequence PPGTGARQPGGAA. Phosphoserine occurs at positions 3820, 3822, and 3825. Positions 3876–3945 are disordered; it reads KAQPPGLQQP…HNMQAPPNMS (70 aa). Residues 3891 to 3910 are compositionally biased toward low complexity; it reads SQQQQQQPLNWLKQQPQQQQ.

May interact with Unc-89 (via protein kinase domain 1 or 2). Expressed ubiquitously in eye imaginal disk, slightly higher expression is seen in presumptive photoreceptors. Expressed in indirect flight muscle (IFM) (at protein level).

Its subcellular location is the cytoplasm. The protein resides in the myofibril. It localises to the sarcomere. The protein localises to the z line. It is found in the m line. Functionally, mediator of receptor tyrosine kinase (RTK) signaling, and may act either downstream of MAPK or transduce signaling through a parallel branch of the RTK pathway. Required for the development and organization of indirect flight muscle sarcomeres by regulating the formation of M line and H zone and the correct assembly of thick and thin filaments in the sarcomere. The sequence is that of Ankyrin repeat and KH domain-containing protein mask from Drosophila melanogaster (Fruit fly).